We begin with the raw amino-acid sequence, 432 residues long: MGKSVAILGAQWGDEGKGKIVDLLTDRVKYVVRYQGGHNAGHTLIINGEKTVLRLIPSGILRDNVTCLIGNGVVLSPEALMKEMGELEARGINVRDRLKISEACPLILPYHVAMDHAREAALGKNKIGTTGRGIGPAYEDKVARRGLRVSDLFDKEAFAEKLKDILDYYNFQLVHYYKVEPVDFQKTLDDVFAIADVIKGMVADVTTLLHQARKEGVNILFEGAQGTMLDIDHGTYPFVTSSNTTAGGVATGSGFGPRNLDYVLGIIKAYCTRVGSGPFTTELFDEVGAEIARKGNEFGAVTGRPRRCGWFDAVAVRRAVQINSISGFCMTKLDVLDGFEELKICTAYKMPNGEIVEYAPMAAKDWKGVEPIYETMPGWSENTFRVTKREELPQAALDYIKRIEELVGVPVDILSTGPDRVETMILRDPFAA.

Residues 13-19 (GDEGKGK) and 41-43 (GHT) each bind GTP. The Proton acceptor role is filled by aspartate 14. Positions 14 and 41 each coordinate Mg(2+). Residues 14 to 17 (DEGK), 39 to 42 (NAGH), threonine 130, arginine 144, glutamine 225, threonine 240, and arginine 304 contribute to the IMP site. The active-site Proton donor is histidine 42. 300–306 (AVTGRPR) serves as a coordination point for substrate. GTP contacts are provided by residues arginine 306, 332 to 334 (KLD), and 415 to 417 (STG).

This sequence belongs to the adenylosuccinate synthetase family. In terms of assembly, homodimer. Mg(2+) is required as a cofactor.

The protein resides in the cytoplasm. The enzyme catalyses IMP + L-aspartate + GTP = N(6)-(1,2-dicarboxyethyl)-AMP + GDP + phosphate + 2 H(+). The protein operates within purine metabolism; AMP biosynthesis via de novo pathway; AMP from IMP: step 1/2. Plays an important role in the de novo pathway of purine nucleotide biosynthesis. Catalyzes the first committed step in the biosynthesis of AMP from IMP. This Actinobacillus pleuropneumoniae serotype 5b (strain L20) protein is Adenylosuccinate synthetase.